The sequence spans 461 residues: Cysteine--tRNA ligase (461 aa).

C28 contributes to the Zn(2+) binding site. Positions 30–40 (ITVYDLCHIGH) match the 'HIGH' region motif. The Zn(2+) site is built by C209, H234, and E238. The 'KMSKS' region motif lies at 266-270 (KMSKS). An ATP-binding site is contributed by K269.

This sequence belongs to the class-I aminoacyl-tRNA synthetase family. Monomer. The cofactor is Zn(2+).

The protein resides in the cytoplasm. It carries out the reaction tRNA(Cys) + L-cysteine + ATP = L-cysteinyl-tRNA(Cys) + AMP + diphosphate. The chain is Cysteine--tRNA ligase from Escherichia coli O127:H6 (strain E2348/69 / EPEC).